An 877-amino-acid polypeptide reads, in one-letter code: Leucine--tRNA ligase (877 aa).

Positions 43–53 match the 'HIGH' region motif; that stretch reads PYPSGRIHMGH. Positions 628–632 match the 'KMSKS' region motif; that stretch reads KMSKS. Position 631 (K631) interacts with ATP.

This sequence belongs to the class-I aminoacyl-tRNA synthetase family.

The protein resides in the cytoplasm. It carries out the reaction tRNA(Leu) + L-leucine + ATP = L-leucyl-tRNA(Leu) + AMP + diphosphate. This Brucella anthropi (strain ATCC 49188 / DSM 6882 / CCUG 24695 / JCM 21032 / LMG 3331 / NBRC 15819 / NCTC 12168 / Alc 37) (Ochrobactrum anthropi) protein is Leucine--tRNA ligase.